The chain runs to 612 residues: tRNA uridine 5-carboxymethylaminomethyl modification enzyme MnmG (612 aa).

Position 9–14 (9–14 (GAGHAG)) interacts with FAD. 270 to 284 (GPLYCPSIEDKVFKF) serves as a coordination point for NAD(+).

The protein belongs to the MnmG family. In terms of assembly, homodimer. Heterotetramer of two MnmE and two MnmG subunits. The cofactor is FAD.

It localises to the cytoplasm. Its function is as follows. NAD-binding protein involved in the addition of a carboxymethylaminomethyl (cmnm) group at the wobble position (U34) of certain tRNAs, forming tRNA-cmnm(5)s(2)U34. In Mycoplasma genitalium (strain ATCC 33530 / DSM 19775 / NCTC 10195 / G37) (Mycoplasmoides genitalium), this protein is tRNA uridine 5-carboxymethylaminomethyl modification enzyme MnmG.